We begin with the raw amino-acid sequence, 117 residues long: Immunoglobulin lambda variable 7-43 (117 aa).

The first 19 residues, 1 to 19 (MAWTPLFLFLLTCCPGSNS), serve as a signal peptide directing secretion. Residues 20–44 (QTVVTQEPSLTVSPGGTVTLTCASS) form a framework-1 region. In terms of domain architecture, Ig-like spans 20-117 (QTVVTQEPSL…YCLLYYGGAQ (98 aa)). A disulfide bridge connects residues Cys-41 and Cys-109. Residues 45–53 (TGAVTSGYY) form a complementarity-determining-1 region. The tract at residues 54 to 70 (PNWFQQKPGQAPRALIY) is framework-2. The interval 71–73 (STS) is complementarity-determining-2. The segment at 74 to 109 (NKHSWTPARFSGSLLGGKAALTLSGVQPEDEAEYYC) is framework-3. A complementarity-determining-3 region spans residues 110–117 (LLYYGGAQ).

As to quaternary structure, immunoglobulins are composed of two identical heavy chains and two identical light chains; disulfide-linked.

The protein localises to the secreted. Its subcellular location is the cell membrane. In terms of biological role, v region of the variable domain of immunoglobulin light chains that participates in the antigen recognition. Immunoglobulins, also known as antibodies, are membrane-bound or secreted glycoproteins produced by B lymphocytes. In the recognition phase of humoral immunity, the membrane-bound immunoglobulins serve as receptors which, upon binding of a specific antigen, trigger the clonal expansion and differentiation of B lymphocytes into immunoglobulins-secreting plasma cells. Secreted immunoglobulins mediate the effector phase of humoral immunity, which results in the elimination of bound antigens. The antigen binding site is formed by the variable domain of one heavy chain, together with that of its associated light chain. Thus, each immunoglobulin has two antigen binding sites with remarkable affinity for a particular antigen. The variable domains are assembled by a process called V-(D)-J rearrangement and can then be subjected to somatic hypermutations which, after exposure to antigen and selection, allow affinity maturation for a particular antigen. The protein is Immunoglobulin lambda variable 7-43 of Homo sapiens (Human).